Consider the following 724-residue polypeptide: Probable metal-nicotianamine transporter YSL8 (724 aa).

The tract at residues 1-58 is disordered; that stretch reads MRKGGLTPDRDRQIEEHELQETGISPDIERLKRNINATPYQREEEEEDREEQEESVEG. Basic and acidic residues predominate over residues 8–20; the sequence is PDRDRQIEEHELQ. At serine 25 the chain carries Phosphoserine. The span at 43–56 shows a compositional bias: acidic residues; that stretch reads EEEEEDREEQEESV. The next 7 membrane-spanning stretches (helical) occupy residues 72–92, 96–116, 144–164, 184–204, 245–265, 304–324, and 349–369; these read LTIRAFVVSFALSILFSFIVM, LTTGIIPSLNVSAGLLGFFFV, CVVASSGIAFSGGFGTYLFAM, LGWMIAFLFVVSFLGLFSVVP, VLGKFFSFSFFWGFFQWFFTA, IINISLLLGGILSWGLMWPLI, and VFIAVATILGDGLYNFCKVLI. Residues 386–407 are disordered; that stretch reads RSSLAHKEDPPASPASPLTPRI. A run of 8 helical transmembrane segments spans residues 423 to 443, 455 to 475, 478 to 497, 501 to 520, 541 to 561, 603 to 623, 641 to 661, and 679 to 699; these read IPSWFAVGGYVVISAVSTAIL, IIVIYIFAPILAFCNAYGAGL, WSLASTYGKLAIFTIGAWAG, GGLLAGLAACGVMMNIVSTA, FVSQVIGTAMGCLVSPCVFWL, LMLCYVFFGVAILINLIKDCL, FFLGPYFAIDMCVGSFILFVW, and GLICGDGIWTLPSSVLAIAGV.

It belongs to the YSL (TC 2.A.67.2) family.

It localises to the membrane. Functionally, may be involved in the transport of nicotianamine-chelated metals. The polypeptide is Probable metal-nicotianamine transporter YSL8 (YSL8) (Arabidopsis thaliana (Mouse-ear cress)).